The following is a 254-amino-acid chain: Ciliary microtubule associated protein 1A (254 aa).

STPGR repeat units lie at residues 180–205 (PGPA…MAAR) and 216–241 (PGPG…FGIK). A disordered region spans residues 207-226 (EPPGDKTLKPGPGAHSPEKV).

The protein belongs to the CIMAP family. In terms of assembly, microtubule inner protein component of sperm flagellar doublet microtubules. Testis-specific.

It is found in the cytoplasm. The protein resides in the cytoskeleton. Its subcellular location is the flagellum axoneme. Functionally, outer dense fibers are filamentous structures located on the outside of the axoneme in the midpiece and principal piece of the mammalian sperm tail. May help to maintain the passive elastic structures and elastic recoil of the sperm tail. This is Ciliary microtubule associated protein 1A from Homo sapiens (Human).